A 164-amino-acid polypeptide reads, in one-letter code: Phosphopantetheine adenylyltransferase (164 aa).

Residue Ser-9 participates in substrate binding. Residues 9-10 (SF) and His-17 each bind ATP. Substrate is bound by residues Lys-41, Leu-73, and Lys-87. Residues 88–90 (GLR), Glu-98, and 123–129 (YSYLSSS) contribute to the ATP site.

The protein belongs to the bacterial CoaD family. Homohexamer. The cofactor is Mg(2+).

The protein localises to the cytoplasm. It carries out the reaction (R)-4'-phosphopantetheine + ATP + H(+) = 3'-dephospho-CoA + diphosphate. The protein operates within cofactor biosynthesis; coenzyme A biosynthesis; CoA from (R)-pantothenate: step 4/5. Functionally, reversibly transfers an adenylyl group from ATP to 4'-phosphopantetheine, yielding dephospho-CoA (dPCoA) and pyrophosphate. This is Phosphopantetheine adenylyltransferase from Clostridium botulinum (strain ATCC 19397 / Type A).